The primary structure comprises 201 residues: Dephospho-CoA kinase (201 aa).

Residues 4–201 (SVGLTGNIAS…KYLREAKIKQ (198 aa)) enclose the DPCK domain. 12–17 (ASGKST) lines the ATP pocket.

The protein belongs to the CoaE family.

It is found in the cytoplasm. The catalysed reaction is 3'-dephospho-CoA + ATP = ADP + CoA + H(+). It functions in the pathway cofactor biosynthesis; coenzyme A biosynthesis; CoA from (R)-pantothenate: step 5/5. Its function is as follows. Catalyzes the phosphorylation of the 3'-hydroxyl group of dephosphocoenzyme A to form coenzyme A. The protein is Dephospho-CoA kinase of Legionella pneumophila (strain Lens).